Consider the following 276-residue polypeptide: Eukaryotic translation initiation factor 3 subunit G-2 (276 aa).

Positions 196–274 (SAVRISNLSE…LILCVEWSKP (79 aa)) constitute an RRM domain.

It belongs to the eIF-3 subunit G family. Component of the eukaryotic translation initiation factor 3 (eIF-3) complex. The eIF-3 complex interacts with pix.

The protein resides in the cytoplasm. RNA-binding component of the eukaryotic translation initiation factor 3 (eIF-3) complex, which is involved in protein synthesis of a specialized repertoire of mRNAs and, together with other initiation factors, stimulates binding of mRNA and methionyl-tRNAi to the 40S ribosome. The eIF-3 complex specifically targets and initiates translation of a subset of mRNAs involved in cell proliferation. This subunit can bind 18S rRNA. The polypeptide is Eukaryotic translation initiation factor 3 subunit G-2 (Drosophila persimilis (Fruit fly)).